A 79-amino-acid chain; its full sequence is Acyl carrier protein (79 aa).

The Carrier domain occupies 3–78 (QEILEKVCSI…DAVKFIEEKK (76 aa)). At Ser-38 the chain carries O-(pantetheine 4'-phosphoryl)serine.

This sequence belongs to the acyl carrier protein (ACP) family. In terms of processing, 4'-phosphopantetheine is transferred from CoA to a specific serine of apo-ACP by AcpS. This modification is essential for activity because fatty acids are bound in thioester linkage to the sulfhydryl of the prosthetic group.

It localises to the cytoplasm. It participates in lipid metabolism; fatty acid biosynthesis. Carrier of the growing fatty acid chain in fatty acid biosynthesis. This is Acyl carrier protein from Prochlorococcus marinus (strain MIT 9312).